The sequence spans 239 residues: Ribonuclease PH (239 aa).

Residues R86 and 124-126 (GTR) each bind phosphate.

Belongs to the RNase PH family. As to quaternary structure, homohexameric ring arranged as a trimer of dimers.

It catalyses the reaction tRNA(n+1) + phosphate = tRNA(n) + a ribonucleoside 5'-diphosphate. In terms of biological role, phosphorolytic 3'-5' exoribonuclease that plays an important role in tRNA 3'-end maturation. Removes nucleotide residues following the 3'-CCA terminus of tRNAs; can also add nucleotides to the ends of RNA molecules by using nucleoside diphosphates as substrates, but this may not be physiologically important. Probably plays a role in initiation of 16S rRNA degradation (leading to ribosome degradation) during starvation. This is Ribonuclease PH from Sinorhizobium medicae (strain WSM419) (Ensifer medicae).